The primary structure comprises 291 residues: MAEISRIQYEMEYTEGISQRMRVPEKLKVAPPNADLEQEFQDGVPNASVIMQVPERIVVTGNNEDISFSRPADLDLIQSTPFKPLALKTPPRVLTLSERPLDFLDLERPLPTPQSEESRAVGRLKRERSMSENAVRQNGQLVRNDSIVTPSPPQARVCPPHMLPEDGANLSSARGILSLIQSSTRRAYQQILDVLDENRRPVLRGGSAAATSNPHHDNVRYGISNLDAAIEGASDDMTVVDAASLRRQIIKLNRRLQLLEEENKERAKREMVMYSITVAFWLLNSWLWFRR.

Over 1-271 (MAEISRIQYE…ENKERAKREM (271 aa)) the chain is Cytoplasmic. The residue at position 89 (Thr89) is a Phosphothreonine. The tract at residues 106-134 (LERPLPTPQSEESRAVGRLKRERSMSENA) is disordered. Residues Ser129, Ser131, and Ser146 each carry the phosphoserine modification. Thr149 carries the phosphothreonine modification. Residues Ser151, Ser178, Ser182, and Ser244 each carry the phosphoserine modification. Residues 240 to 271 (VDAASLRRQIIKLNRRLQLLEEENKERAKREM) are a coiled coil. A helical; Anchor for type IV membrane protein transmembrane segment spans residues 272–289 (VMYSITVAFWLLNSWLWF). The Mitochondrial intermembrane segment spans residues 290-291 (RR).

It belongs to the Tango11 family. Homodimer. Interacts with DNM1L. Interacts with C11orf65/MFI; the interaction inhibits MFF interaction with DNM1L.

It localises to the mitochondrion outer membrane. Its subcellular location is the peroxisome. It is found in the cytoplasmic vesicle. The protein localises to the secretory vesicle. The protein resides in the synaptic vesicle. Its function is as follows. Plays a role in mitochondrial and peroxisomal fission. Promotes the recruitment and association of the fission mediator dynamin-related protein 1 (DNM1L) to the mitochondrial surface. May be involved in regulation of synaptic vesicle membrane dynamics by recruitment of DNM1L to clathrin-containing vesicles. In Mus musculus (Mouse), this protein is Mitochondrial fission factor (Mff).